The following is a 177-amino-acid chain: Small ribosomal subunit protein bS16 (177 aa).

The segment at 80 to 177 (GIIAMPANGS…AAEAPKEEAK (98 aa)) is disordered. Residues 107-122 (AAPAAAPKAEAAPAAE) are compositionally biased toward low complexity.

The protein belongs to the bacterial ribosomal protein bS16 family.

In Pelagibacter ubique (strain HTCC1062), this protein is Small ribosomal subunit protein bS16.